A 424-amino-acid polypeptide reads, in one-letter code: Tyrosine--tRNA ligase (424 aa).

Tyrosine 37 lines the L-tyrosine pocket. Positions 42 to 51 (PTADSLHLGH) match the 'HIGH' region motif. 2 residues coordinate L-tyrosine: tyrosine 175 and glutamine 179. The 'KMSKS' region signature appears at 235 to 239 (KFGKT). Lysine 238 lines the ATP pocket. The region spanning 357 to 414 (ADLQQALVNAELVPSRGQARTMIGSNAVAINGEKQADPEYVFTDADRLFGRYTLLRRG) is the S4 RNA-binding domain.

It belongs to the class-I aminoacyl-tRNA synthetase family. TyrS type 1 subfamily. Homodimer.

It localises to the cytoplasm. It carries out the reaction tRNA(Tyr) + L-tyrosine + ATP = L-tyrosyl-tRNA(Tyr) + AMP + diphosphate + H(+). Its function is as follows. Catalyzes the attachment of tyrosine to tRNA(Tyr) in a two-step reaction: tyrosine is first activated by ATP to form Tyr-AMP and then transferred to the acceptor end of tRNA(Tyr). In Yersinia pestis bv. Antiqua (strain Antiqua), this protein is Tyrosine--tRNA ligase.